We begin with the raw amino-acid sequence, 708 residues long: MLKLFSAFRKNKIWDFNGGIHPPEMKTQSNGTPLRQVPLAQRFVIPLKQHIGAEGELCVSVGDKVLRGQPLTRGRGKMLPVHAPTSGTVTAIAPHSTAHPSALAELSVIIDADGEDCWIPRDGWADYRTRSREELIERIHQFGVAGLGGAGFPTGVKLQGGGDKIETLIINAAECEPYITADDRLMQDCAAQVVEGIRILAHILQPREILIGIEDNKPQAISMLRAVLADSNDISLRVIPTKYPSGGAKQLTYILTGKQVPHGGRSSDIGVLMQNVGTAYAVKRAVIDGEPITERVVTLTGEAIARPGNVWARLGTPVRHLLNDAGFCPSADQMVIMGGPLMGFTLPWLDVPVVKITNCLLAPSANELGEPQEEQSCIRCSACADACPADLLPQQLYWFSKGQQHDKATTHNIADCIECGACAWVCPSNIPLVQYFRQEKAEIAAIRQEEKRAAEAKARFEARQARLEREKAARLERHKSAAVQPAAKDKDAIAAALARVKEKQAQATQPIVIKAGERPDNSAIIAAREARKAQARAKQAELQQTNDAATVADPRKTAVEAAIARAKARKLEQQQANAEPEEQVDPRKAAVEAAIARAKARKLEQQQSNAEPEEQVDPRKAAVEAAIARAKARKLEQQQANAEPEEQVDPRKAAVEAAIARAKARKLEQQQTNAEPEEQVDPRKAAVAAAIARAQAKKAAQQKVVNED.

2 consecutive 4Fe-4S ferredoxin-type domains span residues 369–397 (GEPQ…QQLY) and 407–436 (KATT…VQYF). [4Fe-4S] cluster contacts are provided by Cys-377, Cys-380, Cys-383, Cys-387, Cys-416, Cys-419, Cys-422, and Cys-426. The disordered stretch occupies residues 599 to 686 (KARKLEQQQS…EEQVDPRKAA (88 aa)).

It belongs to the 4Fe4S bacterial-type ferredoxin family. RnfC subfamily. As to quaternary structure, the complex is composed of six subunits: RsxA, RsxB, RsxC, RsxD, RsxE and RsxG. It depends on [4Fe-4S] cluster as a cofactor.

It is found in the cell inner membrane. In terms of biological role, part of a membrane-bound complex that couples electron transfer with translocation of ions across the membrane. Required to maintain the reduced state of SoxR. The protein is Ion-translocating oxidoreductase complex subunit C of Escherichia coli (strain 55989 / EAEC).